A 361-amino-acid chain; its full sequence is Protein RecA (361 aa).

Position 77–84 (77–84 (GPESSGKT)) interacts with ATP.

It belongs to the RecA family.

It is found in the cytoplasm. In terms of biological role, can catalyze the hydrolysis of ATP in the presence of single-stranded DNA, the ATP-dependent uptake of single-stranded DNA by duplex DNA, and the ATP-dependent hybridization of homologous single-stranded DNAs. It interacts with LexA causing its activation and leading to its autocatalytic cleavage. This is Protein RecA from Brucella abortus (strain S19).